The following is a 659-amino-acid chain: Nitrate import ATP-binding protein NrtC (659 aa).

The ABC transporter domain maps to 5–239 (LAVDHVHQVF…RPRQRLEMME (235 aa)). An ATP-binding site is contributed by 42 to 49 (GHSGCGKS). The linker stretch occupies residues 255–278 (QQQRRAKRRAKAAAPAPAVAASQQ). A nrtA-like region spans residues 279-659 (KTVRLGFLPG…VAPIPLATSA (381 aa)).

It belongs to the ABC transporter superfamily. Nitrate/nitrite/cyanate uptake transporter (NitT) (TC 3.A.1.16) family. The complex is composed of two ATP-binding proteins (NrtC and NrtD), two transmembrane proteins (NrtB) and a solute-binding protein (NrtA).

The protein localises to the cell inner membrane. The enzyme catalyses nitrate(out) + ATP + H2O = nitrate(in) + ADP + phosphate + H(+). Its activity is regulated as follows. Transport is inhibited by ammonium. The C-terminal domain of NrtC is involved in the ammonium-promoted inhibition of the nitrate/nitrite transporter. Its function is as follows. Part of the ABC transporter complex NrtABCD involved in nitrate uptake. The complex is probably also involved in nitrite transport. Probably responsible for energy coupling to the transport system. The chain is Nitrate import ATP-binding protein NrtC from Synechococcus elongatus (strain ATCC 33912 / PCC 7942 / FACHB-805) (Anacystis nidulans R2).